Here is a 126-residue protein sequence, read N- to C-terminus: Large-conductance mechanosensitive channel (126 aa).

Helical transmembrane passes span 14–34 (VIDL…VTSL), 40–60 (MPLL…FTFV), and 67–87 (GLFI…FLFI).

It belongs to the MscL family. As to quaternary structure, homopentamer.

The protein localises to the cell membrane. In terms of biological role, channel that opens in response to stretch forces in the membrane lipid bilayer. May participate in the regulation of osmotic pressure changes within the cell. This Bacillus licheniformis (strain ATCC 14580 / DSM 13 / JCM 2505 / CCUG 7422 / NBRC 12200 / NCIMB 9375 / NCTC 10341 / NRRL NRS-1264 / Gibson 46) protein is Large-conductance mechanosensitive channel.